The primary structure comprises 241 residues: Trypsin-1 (241 aa).

An N-terminal signal peptide occupies residues 1–13 (MKSLIFVLLLGAV). Positions 14 to 19 (FAEEDK) are cleaved as a propeptide — activation peptide. The Peptidase S1 domain maps to 20 to 239 (IVGGYECTKH…LSGWVRDTMA (220 aa)). 6 disulfide bridges follow: Cys26–Cys155, Cys44–Cys60, Cys128–Cys228, Cys135–Cys201, Cys166–Cys180, and Cys191–Cys215. Active-site charge relay system residues include His59 and Asp103. Ser195 functions as the Charge relay system in the catalytic mechanism.

The protein belongs to the peptidase S1 family.

Its subcellular location is the secreted. The protein resides in the extracellular space. It catalyses the reaction Preferential cleavage: Arg-|-Xaa, Lys-|-Xaa.. The polypeptide is Trypsin-1 (Gadus morhua (Atlantic cod)).